The primary structure comprises 97 residues: uncharacterized protein (97 aa).

This is an uncharacterized protein from Alcelaphine herpesvirus 1 (strain C500) (AlHV-1).